The sequence spans 780 residues: Protein AMEIOTIC 1 (780 aa).

2 disordered regions span residues 32–60 (KKKTSSSHSRNGKDDVNHDSTIQPRSPLS) and 237–327 (APKE…RWSA). A compositionally biased stretch (polar residues) spans 50 to 60 (DSTIQPRSPLS). Basic and acidic residues-rich tracts occupy residues 263 to 291 (EVKRSERNCKRKREAEASSKDNNGDEGKK) and 309 to 327 (RTVESKDGDPRHGKDRWSA). Positions 448–547 (VEELTEEVNG…LEEQVTYLSS (100 aa)) form a coiled coil.

The protein resides in the nucleus. Its subcellular location is the chromosome. Its function is as follows. Plays a fundamental role in building the proper chromosome structure at the beginning of meiosis in male meiocytes. Required for the transition from leptotene to zygotene in meiocytes. Required for homologous chromosome pairing, and initiation and progression of meiotic recombination. Regulates meiocyte cytoskeleton organization. This chain is Protein AMEIOTIC 1, found in Zea mays (Maize).